The primary structure comprises 337 residues: o-succinylbenzoate synthase (337 aa).

The active-site Proton donor is K142. 3 residues coordinate Mg(2+): D170, E199, and D222. K248 acts as the Proton acceptor in catalysis.

This sequence belongs to the mandelate racemase/muconate lactonizing enzyme family. MenC type 1 subfamily. Requires a divalent metal cation as cofactor.

The catalysed reaction is (1R,6R)-6-hydroxy-2-succinyl-cyclohexa-2,4-diene-1-carboxylate = 2-succinylbenzoate + H2O. It participates in quinol/quinone metabolism; 1,4-dihydroxy-2-naphthoate biosynthesis; 1,4-dihydroxy-2-naphthoate from chorismate: step 4/7. Its pathway is quinol/quinone metabolism; menaquinone biosynthesis. In terms of biological role, converts 2-succinyl-6-hydroxy-2,4-cyclohexadiene-1-carboxylate (SHCHC) to 2-succinylbenzoate (OSB). This is o-succinylbenzoate synthase from Pasteurella multocida (strain Pm70).